The sequence spans 285 residues: 2-dehydro-3-deoxyphosphooctonate aldolase (285 aa).

Belongs to the KdsA family.

It localises to the cytoplasm. It carries out the reaction D-arabinose 5-phosphate + phosphoenolpyruvate + H2O = 3-deoxy-alpha-D-manno-2-octulosonate-8-phosphate + phosphate. The protein operates within carbohydrate biosynthesis; 3-deoxy-D-manno-octulosonate biosynthesis; 3-deoxy-D-manno-octulosonate from D-ribulose 5-phosphate: step 2/3. Its pathway is bacterial outer membrane biogenesis; lipopolysaccharide biosynthesis. The sequence is that of 2-dehydro-3-deoxyphosphooctonate aldolase from Acinetobacter baumannii (strain AB307-0294).